We begin with the raw amino-acid sequence, 744 residues long: Tripartite motif-containing protein 3 (744 aa).

Alanine 2 is subject to N-acetylalanine. The tract at residues 2–290 (AKREDSPGPE…LAAQAFPERP (289 aa)) is interaction with KIF21B. The residue at position 7 (serine 7) is a Phosphoserine. The RING-type zinc-finger motif lies at 22-63 (CSICLDRYRCPKVLPCLHTFCERCLQNYIPPQSLTLSCPVCR). The segment at 110-151 (GRPLSCPNHEGKTMEFYCEACETAMCGECRAGEHREHGTVLL) adopts a B box-type zinc-finger fold. The Zn(2+) site is built by cysteine 115, histidine 118, cysteine 138, and histidine 143. A coiled-coil region spans residues 153-224 (DVVEQHKAAL…RKQALVSDLE (72 aa)). The stretch at 317–418 (TTSATAHETV…VRGSPFRVRA (102 aa)) is one Filamin repeat. Residues 419 to 464 (LRPGDLPPSPDDVKRRVKSPGGPGSHVRQKAVRRPSSMYSTGGKRK) are disordered. Serine 427 carries the post-translational modification Phosphoserine. NHL repeat units follow at residues 473-516 (VFRV…FSNE), 520-563 (KFRF…FSPE), 564-605 (GKFK…FQPN), 609-652 (VGRF…YSAD), 656-699 (LFKF…FDSS), and 700-743 (GSFL…YRYL).

It belongs to the TRIM/RBCC family. In terms of assembly, forms homooligomers. Interacts with TRIM2; this interaction reduces TRIM2 activity. Associates with myosin-Vb (MYO5B) and alpha-actinin-4 (ACTN4). Component of the CART complex, at least composed of ACTN4, HGS/HRS, MYO5B and TRIM3. Interacts with ZFYVE28/LST2. Interacts with KIF21B.

Its subcellular location is the cytoplasm. It is found in the early endosome. It localises to the golgi apparatus. The protein localises to the trans-Golgi network. The protein resides in the cell projection. Its subcellular location is the dendrite. The catalysed reaction is S-ubiquitinyl-[E2 ubiquitin-conjugating enzyme]-L-cysteine + [acceptor protein]-L-lysine = [E2 ubiquitin-conjugating enzyme]-L-cysteine + N(6)-ubiquitinyl-[acceptor protein]-L-lysine.. Functionally, E3 ubiquitin ligase that plays essential roles in neuronal functions such as regulation of neuronal plasticity, learning, and memory. In addition to its neuronal functions, participates in other biological processes such as innate immunity or cell cycle regulation. Component of the cytoskeleton-associated recycling or transport complex in neurons, polyubiquitinates gamma-actin, thus regulating neuronal plasticity, learning, and memory. Ubiquitinates postsynaptic scaffold GKAP, a neuronal substrate involved in synaptic remodeling and thereby modulates dendritic spine morphology. Positively regulates motility of microtubule-dependent motor protein KIF21B. Induces growth arrest via its RING-dependent E3 ligase activity and ubiquinates CDKN1A. Positively regulates TLR3-mediated signaling by mediating 'Lys-63'-linked polyubiquitination of TLR3. In turn, promotes the recognition and sorting of polyubiquitinated TLR3 by the ESCRT complexes. This chain is Tripartite motif-containing protein 3 (Trim3), found in Mus musculus (Mouse).